The sequence spans 262 residues: Ribose-5-phosphate isomerase A (262 aa).

Substrate-binding positions include Thr33–Thr36, Asp89–Asp92, and Lys102–Gly105. The Proton acceptor role is filled by Glu111. Lys129 lines the substrate pocket.

The protein belongs to the ribose 5-phosphate isomerase family. As to quaternary structure, homodimer.

It catalyses the reaction aldehydo-D-ribose 5-phosphate = D-ribulose 5-phosphate. It participates in carbohydrate degradation; pentose phosphate pathway; D-ribose 5-phosphate from D-ribulose 5-phosphate (non-oxidative stage): step 1/1. Functionally, catalyzes the reversible conversion of ribose-5-phosphate to ribulose 5-phosphate. The sequence is that of Ribose-5-phosphate isomerase A from Cereibacter sphaeroides (strain ATCC 17023 / DSM 158 / JCM 6121 / CCUG 31486 / LMG 2827 / NBRC 12203 / NCIMB 8253 / ATH 2.4.1.) (Rhodobacter sphaeroides).